The primary structure comprises 275 residues: Exosome complex component RRP40 (275 aa).

A2 is subject to N-acetylalanine. Residue K151 forms a Glycyl lysine isopeptide (Lys-Gly) (interchain with G-Cter in SUMO2) linkage.

The protein belongs to the RRP40 family. As to quaternary structure, component of the RNA exosome core complex (Exo-9), composed of EXOSC1, EXOSC2, EXOSC3, EXOSC4, EXOSC5, EXOSC6, EXOSC7, EXOSC8 and EXOSC9; within the complex interacts with EXOSC5 and EXOSC9. The catalytically inactive RNA exosome core complex (Exo-9) associates with the catalytic subunit EXOSC10/RRP6. Exo-9 may associate with DIS3 to form the nucleolar exosome complex, or DIS3L to form the cytoplasmic exosome complex. Exo-9 is formed by a hexameric base ring consisting of the heterodimers EXOSC4-EXOSC9, EXOSC5-EXOSC8 and EXOSC6-EXOSC7, and a cap ring consisting of EXOSC1, EXOSC2 and EXOSC3. The RNA exosome complex associates with cofactors C1D/RRP47, MPHOSPH6/MPP6 and MTREX/MTR4. Interacts with MPHOSPH6/MPP6; the interaction is direct. Interacts with GTPBP1. Interacts with ZC3HAV1. Interacts with DDX17 only in the presence of ZC3HAV1 in an RNA-independent manner. Interacts with DHX36; this interaction occurs in a RNase-insensitive manner. Interacts with HBS1L isoform 2.

The protein localises to the cytoplasm. It localises to the nucleus. It is found in the nucleolus. Functionally, non-catalytic component of the RNA exosome complex which has 3'-&gt;5' exoribonuclease activity and participates in a multitude of cellular RNA processing and degradation events. In the nucleus, the RNA exosome complex is involved in proper maturation of stable RNA species such as rRNA, snRNA and snoRNA, in the elimination of RNA processing by-products and non-coding 'pervasive' transcripts, such as antisense RNA species and promoter-upstream transcripts (PROMPTs), and of mRNAs with processing defects, thereby limiting or excluding their export to the cytoplasm. The RNA exosome may be involved in Ig class switch recombination (CSR) and/or Ig variable region somatic hypermutation (SHM) by targeting AICDA deamination activity to transcribed dsDNA substrates. In the cytoplasm, the RNA exosome complex is involved in general mRNA turnover and specifically degrades inherently unstable mRNAs containing AU-rich elements (AREs) within their 3' untranslated regions, and in RNA surveillance pathways, preventing translation of aberrant mRNAs. It seems to be involved in degradation of histone mRNA. The catalytic inactive RNA exosome core complex of 9 subunits (Exo-9) is proposed to play a pivotal role in the binding and presentation of RNA for ribonucleolysis, and to serve as a scaffold for the association with catalytic subunits and accessory proteins or complexes. EXOSC3 as peripheral part of the Exo-9 complex stabilizes the hexameric ring of RNase PH-domain subunits through contacts with EXOSC9 and EXOSC5. The protein is Exosome complex component RRP40 (EXOSC3) of Homo sapiens (Human).